The following is a 549-amino-acid chain: Hydroxylamine reductase (549 aa).

Positions 5, 8, 17, and 23 each coordinate [4Fe-4S] cluster. Positions 244, 268, 312, 403, 431, 456, 491, and 493 each coordinate hybrid [4Fe-2O-2S] cluster. Cys-403 carries the cysteine persulfide modification.

The protein belongs to the HCP family. Requires [4Fe-4S] cluster as cofactor. It depends on hybrid [4Fe-2O-2S] cluster as a cofactor.

It is found in the cytoplasm. It catalyses the reaction A + NH4(+) + H2O = hydroxylamine + AH2 + H(+). Its function is as follows. Catalyzes the reduction of hydroxylamine to form NH(3) and H(2)O. The chain is Hydroxylamine reductase from Caldanaerobacter subterraneus subsp. tengcongensis (strain DSM 15242 / JCM 11007 / NBRC 100824 / MB4) (Thermoanaerobacter tengcongensis).